Reading from the N-terminus, the 387-residue chain is Phosphoglycerate kinase (387 aa).

Substrate is bound by residues 21 to 23 (DLN), Arg36, 59 to 62 (HLGR), Arg113, and Arg146. Residues Lys197, Glu314, and 340-343 (GGDT) each bind ATP.

Belongs to the phosphoglycerate kinase family. In terms of assembly, monomer.

The protein localises to the cytoplasm. The catalysed reaction is (2R)-3-phosphoglycerate + ATP = (2R)-3-phospho-glyceroyl phosphate + ADP. The protein operates within carbohydrate degradation; glycolysis; pyruvate from D-glyceraldehyde 3-phosphate: step 2/5. In Aeromonas salmonicida (strain A449), this protein is Phosphoglycerate kinase.